The sequence spans 166 residues: Small ribosomal subunit protein uS5 (166 aa).

One can recognise an S5 DRBM domain in the interval 11 to 74 (LQEKLIAVNR…EKARRNMINV (64 aa)).

Belongs to the universal ribosomal protein uS5 family. In terms of assembly, part of the 30S ribosomal subunit. Contacts proteins S4 and S8.

Functionally, with S4 and S12 plays an important role in translational accuracy. In terms of biological role, located at the back of the 30S subunit body where it stabilizes the conformation of the head with respect to the body. The sequence is that of Small ribosomal subunit protein uS5 from Haemophilus influenzae (strain 86-028NP).